Reading from the N-terminus, the 101-residue chain is Small ribosomal subunit protein uS14 (101 aa).

Belongs to the universal ribosomal protein uS14 family. Part of the 30S ribosomal subunit. Contacts proteins S3 and S10.

Its function is as follows. Binds 16S rRNA, required for the assembly of 30S particles and may also be responsible for determining the conformation of the 16S rRNA at the A site. The polypeptide is Small ribosomal subunit protein uS14 (Acinetobacter baumannii (strain AB307-0294)).